Reading from the N-terminus, the 145-residue chain is D-aminoacyl-tRNA deacylase (145 aa).

Positions 137-138 (GP) match the Gly-cisPro motif, important for rejection of L-amino acids motif.

Belongs to the DTD family. Homodimer.

The protein resides in the cytoplasm. It carries out the reaction glycyl-tRNA(Ala) + H2O = tRNA(Ala) + glycine + H(+). It catalyses the reaction a D-aminoacyl-tRNA + H2O = a tRNA + a D-alpha-amino acid + H(+). In terms of biological role, an aminoacyl-tRNA editing enzyme that deacylates mischarged D-aminoacyl-tRNAs. Also deacylates mischarged glycyl-tRNA(Ala), protecting cells against glycine mischarging by AlaRS. Acts via tRNA-based rather than protein-based catalysis; rejects L-amino acids rather than detecting D-amino acids in the active site. By recycling D-aminoacyl-tRNA to D-amino acids and free tRNA molecules, this enzyme counteracts the toxicity associated with the formation of D-aminoacyl-tRNA entities in vivo and helps enforce protein L-homochirality. The protein is D-aminoacyl-tRNA deacylase of Pseudomonas aeruginosa (strain UCBPP-PA14).